The chain runs to 119 residues: Ribonuclease P protein component (119 aa).

It belongs to the RnpA family. In terms of assembly, consists of a catalytic RNA component (M1 or rnpB) and a protein subunit.

It catalyses the reaction Endonucleolytic cleavage of RNA, removing 5'-extranucleotides from tRNA precursor.. Functionally, RNaseP catalyzes the removal of the 5'-leader sequence from pre-tRNA to produce the mature 5'-terminus. It can also cleave other RNA substrates such as 4.5S RNA. The protein component plays an auxiliary but essential role in vivo by binding to the 5'-leader sequence and broadening the substrate specificity of the ribozyme. This Yersinia pseudotuberculosis serotype O:1b (strain IP 31758) protein is Ribonuclease P protein component.